Reading from the N-terminus, the 3082-residue chain is Autotransporter adhesin BadA (3082 aa).

The signal sequence occupies residues 1–47 (MKKLSVTSKRQYNLYASPISRRLSLLMKLSLETVTVMFLLGASPVLA). Residues 48–376 (SNLALTGAKN…DAVNVAQLKA (329 aa)) form a binds to host cells region. The segment at 48–2901 (SNLALTGAKN…KVQDIATVAD (2854 aa)) is surface exposed passenger domain. The segment at 53 to 2850 (TGAKNLSQNS…DARHNGVDSK (2798 aa)) is does not bind host cells, no host proangiogenic cytokine induction, collagen or fibronectin, no autoagglutination. Residues 470–2850 (ITGVAEGTDA…DARHNGVDSK (2381 aa)) are required to bind fibronectin, not required for surface expression on bacteria, bacterial autoagglutination, host cell binding, collagen binding or host proangiogenic cytokine induction. An outer membrane translocation of the passenger domain region spans residues 2902 to 3027 (SAVKYEKDST…VSNLRYYDIP (126 aa)). A run of 4 beta stranded transmembrane segments spans residues 3028 to 3039 (GSLSLSFGTGIW), 3044 to 3051 (AFAIGAGY), 3055 to 3065 (DGNIRSNLSIT), and 3070 to 3082 (QWGVGAGITLRLK). The interval 3028–3082 (GSLSLSFGTGIWRSQSAFAIGAGYTSEDGNIRSNLSITSSGGQWGVGAGITLRLK) is translocator domain.

The protein belongs to the autotransporter-2 (AT-2) (TC 1.B.40) family. Homotrimer. Crystals of the head region form trimers.

It is found in the cell surface. It localises to the cell outer membrane. In terms of biological role, mediates bacterial adherence to host endothelial cells and host extracellular matrix proteins (collagen type I, III, IV, laminin and fibronectin). Static versus dynamic adherence results differ slightly; in dynamic adherence studies bacteria bind to fixed components under a constant defined flow rate to simulate in vivo infection conditions. Induces secretion of host proangiogenic cytokines such as VEGFA, ADM, IGFBP-3 and IL-8. May prevent bacterial phagocytosis by macrophages. Probably mediates bacterial autoagglutination. Negatively impacts type IV secretion system effectors (VirB/D4 T4SS and its substrate Bep proteins), possibly by preventing close association of host and bacterial cells. This implies the 2 factors are expressed at different times during infection. The chain is Autotransporter adhesin BadA from Bartonella henselae (Rochalimaea henselae).